The following is a 392-amino-acid chain: Cyclic AMP receptor 1 (392 aa).

Topologically, residues 1-13 are extracellular; sequence MGLLDGNPANETS. Residue asparagine 10 is glycosylated (N-linked (GlcNAc...) asparagine). Residues 14–33 form a helical membrane-spanning segment; it reads LVLLLFADFSSMLGCMAVLI. Topologically, residues 34–47 are cytoplasmic; sequence GFWRLKLLRNHVTK. A helical membrane pass occupies residues 48 to 68; that stretch reads VIACFCATSFCKDFPSTILTL. The Extracellular segment spans residues 69–83; the sequence is TNTAVNGGFPCYLYA. Residues 84–109 form a helical membrane-spanning segment; sequence IVITYGSFACWLWTLCLAISIYMLIV. Residues 110–120 are Cytoplasmic-facing; that stretch reads KREPEPERFEK. A helical transmembrane segment spans residues 121-139; it reads YYYLLCWGLPLISTIVMLA. Residues 140-162 lie on the Extracellular side of the membrane; the sequence is KNTVQFVGNWCWIGVSFTGYRFG. Residues 163–181 form a helical membrane-spanning segment; it reads LFYGPFLFIWAISAVLVGL. The Cytoplasmic portion of the chain corresponds to 182–205; sequence TSRYTYVVIHNGVSDNKEKHLTYQ. A helical membrane pass occupies residues 206-224; it reads FKLINYIIVFLVCWVFAVV. Residues 225-235 lie on the Extracellular side of the membrane; sequence NRIVNGLNMFP. A helical membrane pass occupies residues 236 to 260; the sequence is PALNILHTYLSVSHGFWASVTFIYN. The Cytoplasmic portion of the chain corresponds to 261 to 392; the sequence is NPLMWRYFGA…STSTNGQGNN (132 aa). Disordered stretches follow at residues 292-324 and 339-392; these read NKNNNNPSPYSSSRGTSGKTMGGHPTGDDVQCS and VNNQ…QGNN. The segment covering 298-310 has biased composition (polar residues); sequence PSPYSSSRGTSGK. Residues serine 299, serine 302, serine 303, serine 304, serine 308, serine 360, serine 361, serine 362, serine 363, serine 364, serine 366, serine 367, and serine 368 each carry the phosphoserine modification. Residues 340–367 show a composition bias toward low complexity; sequence NNQQNLNNNYGLQQNYNDEGSSSSSLSS. Polar residues predominate over residues 375-392; sequence VEMQNIQISTSTNGQGNN.

It belongs to the G-protein coupled receptor 5 family. C-terminal Ser or Thr residues may be phosphorylated.

The protein resides in the membrane. Its function is as follows. Receptor for cAMP. Coordinates the aggregation of individual cells into a multicellular organism and regulates the expression of a large number of developmentally regulated genes. The activity of this receptor is mediated by G proteins. The sequence is that of Cyclic AMP receptor 1 (carA-1) from Dictyostelium discoideum (Social amoeba).